A 428-amino-acid polypeptide reads, in one-letter code: MEFLDLPGRSRASGTVRLPGSKSISNRVLLLAALAEGVTDVYDVLDSDDTRYMLAALQALGVGVEDRGDNHWRVTGVAGAFPARQAELFLGNAGTAFRPLTAVLALSGGDYVLDGVARMHERPIGDLVDALRQLGGRIDYRGTLGFPPLHVHPPQAGADVAHIRGNVSSQFLTGLLMALPLRRLRTRVEVVGELISKPYIEITLAMLRRFGVEVARDGWQAFSVAADACYRSPREIYVEGDASSASYFLAAGAIGGGPVRVEGVGRDSVQGDVGFADALAAMGARIAMGPNWIEACAPAQGRLKAIDLDCNAIPDAAMTLAVAALFADGTTTLRNIASWRVKETDRIAAMATELRKVGATVEEGDDFLRVTPPETLRAGAVIDTYDDHRMAMCLSLVSLGGVAVRINDPGCVAKTFPGYFNAFAEIAR.

3 residues coordinate 3-phosphoshikimate: K22, S23, and R27. A phosphoenolpyruvate-binding site is contributed by K22. 2 residues coordinate phosphoenolpyruvate: G94 and R122. Residues S168, S169, Q170, S196, D315, and K342 each coordinate 3-phosphoshikimate. Q170 serves as a coordination point for phosphoenolpyruvate. D315 (proton acceptor) is an active-site residue. The phosphoenolpyruvate site is built by R346, R389, and K414.

The protein belongs to the EPSP synthase family. In terms of assembly, monomer.

Its subcellular location is the cytoplasm. It carries out the reaction 3-phosphoshikimate + phosphoenolpyruvate = 5-O-(1-carboxyvinyl)-3-phosphoshikimate + phosphate. It functions in the pathway metabolic intermediate biosynthesis; chorismate biosynthesis; chorismate from D-erythrose 4-phosphate and phosphoenolpyruvate: step 6/7. Catalyzes the transfer of the enolpyruvyl moiety of phosphoenolpyruvate (PEP) to the 5-hydroxyl of shikimate-3-phosphate (S3P) to produce enolpyruvyl shikimate-3-phosphate and inorganic phosphate. In Thiobacillus denitrificans (strain ATCC 25259 / T1), this protein is 3-phosphoshikimate 1-carboxyvinyltransferase.